Here is a 186-residue protein sequence, read N- to C-terminus: NADH-quinone oxidoreductase subunit B (186 aa).

Residues cysteine 44, cysteine 45, cysteine 110, and cysteine 139 each coordinate [4Fe-4S] cluster.

It belongs to the complex I 20 kDa subunit family. In terms of assembly, NDH-1 is composed of 14 different subunits. Subunits NuoB, C, D, E, F, and G constitute the peripheral sector of the complex. [4Fe-4S] cluster is required as a cofactor.

Its subcellular location is the cell inner membrane. It catalyses the reaction a quinone + NADH + 5 H(+)(in) = a quinol + NAD(+) + 4 H(+)(out). Its function is as follows. NDH-1 shuttles electrons from NADH, via FMN and iron-sulfur (Fe-S) centers, to quinones in the respiratory chain. The immediate electron acceptor for the enzyme in this species is believed to be ubiquinone. Couples the redox reaction to proton translocation (for every two electrons transferred, four hydrogen ions are translocated across the cytoplasmic membrane), and thus conserves the redox energy in a proton gradient. The polypeptide is NADH-quinone oxidoreductase subunit B (Leptospira biflexa serovar Patoc (strain Patoc 1 / Ames)).